Here is an 83-residue protein sequence, read N- to C-terminus: Small ribosomal subunit protein bS16 (83 aa).

The protein belongs to the bacterial ribosomal protein bS16 family.

The chain is Small ribosomal subunit protein bS16 from Azoarcus sp. (strain BH72).